The sequence spans 1035 residues: MSGSYPFIDIAALDSVREGFARGDAQLVLAHDLSTVLWVNGPGAKLFGYNRVEDLIEGQLDLPVATRRQIAAFSSENTSAPSAVAVRLGGGLRSELTHLHVSNIKLPDGVAALLVATQMPDNSAEAAISGLGDDSTHIALVDAVGKVVAASLRFALLDISASTLEDLIVEAGDATDRIVKRRIRTGSHSVPGAIARLTDTPALHLLCIVGDAPAQFQTAAEAVPLPDNAEAVLEEILPEQGDAPAQQAQKTHAEQPRPKTFAFDHDAPPARFIWKVGPDGTFSEISPDLAAVVGPNSADMVGRRFSDVANVFGFDTDGSIAALLLERDTWSGKRLLWPVEGTRLRVPVELAALPVYSRDREFLGFRGFGIVRPAEAEADPEEIGLALAGGIPQNRKPRKEPAETARMVGEDDVLALSEEVANDDQPAAVLPKPPLDITPTPGRRDSDKVISLLNSCAQEKVAADQAKFLKEKERATRPEGGLTKTERNAFREIAERLRKQGLANTRAESETPVSETSSIEPVEPTPPVKTRSEPIQPDETALLANLPVPVIIHSGDAIHYVNQALLDITGYESLDDIRSAGGVDVLFNSESDDGETRQSMVLRHADGSEEPVDAHLNAIAWRGGRALMLSLMPVTAADLPAPAELPAANDEEKQALEAHVEELKTILDTATDGVVLIDPEGRIRSMNHSASALFGYERDEAEGKFFSMLFAIESQRAAMDYLHGLSGNGVLSVLNDGREVIGREAKGGFIPLFMTIGKLPHTRGFCAVLRDITQWKRTEEELTNARKEAERASNQKTEFLARISHEIRTPLNAIIGFSELMADEKFGPIGNDRYRDYLRDINRSGNHVLALVNDLLDISKIEAGALDMQFEAVSLNDAIGEAIALMQPQANRERVIIRSSFQSNLPDIVADSRSIKQVALNLLSNAVRFTAPGRQVIVSTSYELNGDVVMRVRDTGIGMSKSEVEQALKPFRQINALERRKAESAKDWRNEGTGLGLPLTKAMVEANRAQFAIDSNPGQGTVVEIVFPPTRVLAD.

The tract at residues 1 to 613 is important for polar localization; the sequence is MSGSYPFIDI…HADGSEEPVD (613 aa). Residues 500–533 form a disordered region; the sequence is QGLANTRAESETPVSETSSIEPVEPTPPVKTRSE. Positions 614 to 1035 are interaction with DivK; that stretch reads AHLNAIAWRG…VFPPTRVLAD (422 aa). A PAS domain is found at 659 to 730; the sequence is HVEELKTILD…YLHGLSGNGV (72 aa). One can recognise a Histidine kinase domain in the interval 802-1031; the sequence is RISHEIRTPL…VVEIVFPPTR (230 aa). A Phosphohistidine; by autocatalysis modification is found at H805.

Interacts with DivK.

Its subcellular location is the cytoplasm. The enzyme catalyses ATP + protein L-histidine = ADP + protein N-phospho-L-histidine.. In terms of biological role, functions as a polar differentiation marker. Essential protein that, by localizing in the old pole of dividing cells, controls cell division and maturation, probably through control of DivK phosphorylation status and cellular distribution, which in turn regulates CtrA, a transcriptional regulator of the minB operon. The asymmetrical localization of this protein is probably required for cells to enter a new division cycle. The polypeptide is Cell-division control histidine kinase PdhS (pdhS) (Brucella ovis (strain ATCC 25840 / 63/290 / NCTC 10512)).